The following is a 539-amino-acid chain: Putative cysteine ligase BshC (539 aa).

ADP-binding positions include serine 146 and 384–386 (ERH). Residues 455–475 (LLKNAAFIQDQLQFLERTVMK) adopt a coiled-coil conformation. ADP contacts are provided by residues 490 to 493 (RIQN), tryptophan 506, and tyrosine 510.

It belongs to the BshC family. In terms of assembly, homodimer in solution.

In terms of biological role, involved in bacillithiol (BSH) biosynthesis. May catalyze the last step of the pathway, the addition of cysteine to glucosamine malate (GlcN-Mal) to generate BSH. The sequence is that of Putative cysteine ligase BshC from Bacillus subtilis (strain 168).